A 307-amino-acid chain; its full sequence is Homoserine O-acetyltransferase (307 aa).

Catalysis depends on cysteine 142, which acts as the Acyl-thioester intermediate. Substrate-binding residues include lysine 163 and serine 192. The Proton acceptor role is filled by histidine 235. Residue glutamate 237 is part of the active site. Arginine 249 is a substrate binding site.

It belongs to the MetA family.

It is found in the cytoplasm. It catalyses the reaction L-homoserine + acetyl-CoA = O-acetyl-L-homoserine + CoA. It participates in amino-acid biosynthesis; L-methionine biosynthesis via de novo pathway; O-acetyl-L-homoserine from L-homoserine: step 1/1. In terms of biological role, transfers an acetyl group from acetyl-CoA to L-homoserine, forming acetyl-L-homoserine. The polypeptide is Homoserine O-acetyltransferase (Sinorhizobium fredii (strain NBRC 101917 / NGR234)).